A 292-amino-acid polypeptide reads, in one-letter code: Diaminopimelate epimerase (292 aa).

N14 and N78 together coordinate substrate. C87 acts as the Proton donor in catalysis. Substrate contacts are provided by residues 88–89 (GN), N164, N197, and 221–222 (ER). The active-site Proton acceptor is C230. 231–232 (GT) lines the substrate pocket.

It belongs to the diaminopimelate epimerase family. Homodimer.

Its subcellular location is the cytoplasm. It carries out the reaction (2S,6S)-2,6-diaminopimelate = meso-2,6-diaminopimelate. It functions in the pathway amino-acid biosynthesis; L-lysine biosynthesis via DAP pathway; DL-2,6-diaminopimelate from LL-2,6-diaminopimelate: step 1/1. Its function is as follows. Catalyzes the stereoinversion of LL-2,6-diaminopimelate (L,L-DAP) to meso-diaminopimelate (meso-DAP), a precursor of L-lysine and an essential component of the bacterial peptidoglycan. The chain is Diaminopimelate epimerase from Leifsonia xyli subsp. xyli (strain CTCB07).